We begin with the raw amino-acid sequence, 671 residues long: DNA ligase (671 aa).

NAD(+) contacts are provided by residues 34–38, 83–84, and E113; these read DSEYD and SL. K115 (N6-AMP-lysine intermediate) is an active-site residue. Residues R136, E170, K286, and K310 each coordinate NAD(+). The Zn(2+) site is built by C404, C407, C422, and C427. Positions 590-671 constitute a BRCT domain; sequence EEAGVFAGKT…FTQAVEQSEQ (82 aa).

It belongs to the NAD-dependent DNA ligase family. LigA subfamily. Requires Mg(2+) as cofactor. The cofactor is Mn(2+).

The enzyme catalyses NAD(+) + (deoxyribonucleotide)n-3'-hydroxyl + 5'-phospho-(deoxyribonucleotide)m = (deoxyribonucleotide)n+m + AMP + beta-nicotinamide D-nucleotide.. In terms of biological role, DNA ligase that catalyzes the formation of phosphodiester linkages between 5'-phosphoryl and 3'-hydroxyl groups in double-stranded DNA using NAD as a coenzyme and as the energy source for the reaction. It is essential for DNA replication and repair of damaged DNA. In Shouchella clausii (strain KSM-K16) (Alkalihalobacillus clausii), this protein is DNA ligase.